Here is a 132-residue protein sequence, read N- to C-terminus: Fluoride-specific ion channel FluC 2 (132 aa).

4 helical membrane-spanning segments follow: residues 12 to 32 (LTEL…RWQL), 41 to 61 (LLVN…PVAP), 65 to 85 (LLVG…MLAA), and 96 to 116 (AALG…ALGF). Residues Gly73 and Thr76 each contribute to the Na(+) site.

The protein belongs to the fluoride channel Fluc/FEX (TC 1.A.43) family.

The protein localises to the cell inner membrane. It catalyses the reaction fluoride(in) = fluoride(out). With respect to regulation, na(+) is not transported, but it plays an essential structural role and its presence is essential for fluoride channel function. In terms of biological role, fluoride-specific ion channel. Important for reducing fluoride concentration in the cell, thus reducing its toxicity. The polypeptide is Fluoride-specific ion channel FluC 2 (Parasynechococcus marenigrum (strain WH8102)).